We begin with the raw amino-acid sequence, 220 residues long: Cytidylate kinase (220 aa).

Residue 9–17 participates in ATP binding; that stretch reads GPAASGKST.

It belongs to the cytidylate kinase family. Type 1 subfamily.

The protein localises to the cytoplasm. The catalysed reaction is CMP + ATP = CDP + ADP. It carries out the reaction dCMP + ATP = dCDP + ADP. The sequence is that of Cytidylate kinase from Thermotoga sp. (strain RQ2).